A 62-amino-acid chain; its full sequence is Large ribosomal subunit protein bL28 (62 aa).

This sequence belongs to the bacterial ribosomal protein bL28 family.

The chain is Large ribosomal subunit protein bL28 from Staphylococcus haemolyticus (strain JCSC1435).